The primary structure comprises 283 residues: Thymidylate synthase (283 aa).

Residue Arg-22 coordinates dUMP. The active-site Nucleophile is Cys-160. DUMP-binding positions include 180–183, Asn-191, and 221–223; these read RSCD and HIY. A (6R)-5,10-methylene-5,6,7,8-tetrahydrofolate-binding site is contributed by Asp-183. Ser-282 contributes to the (6R)-5,10-methylene-5,6,7,8-tetrahydrofolate binding site.

Belongs to the thymidylate synthase family. Bacterial-type ThyA subfamily. As to quaternary structure, homodimer.

The protein resides in the cytoplasm. The enzyme catalyses dUMP + (6R)-5,10-methylene-5,6,7,8-tetrahydrofolate = 7,8-dihydrofolate + dTMP. The protein operates within pyrimidine metabolism; dTTP biosynthesis. Catalyzes the reductive methylation of 2'-deoxyuridine-5'-monophosphate (dUMP) to 2'-deoxythymidine-5'-monophosphate (dTMP) while utilizing 5,10-methylenetetrahydrofolate (mTHF) as the methyl donor and reductant in the reaction, yielding dihydrofolate (DHF) as a by-product. This enzymatic reaction provides an intracellular de novo source of dTMP, an essential precursor for DNA biosynthesis. This is Thymidylate synthase from Psychromonas ingrahamii (strain DSM 17664 / CCUG 51855 / 37).